A 211-amino-acid chain; its full sequence is Cytochrome c biogenesis ATP-binding export protein CcmA (211 aa).

Residues 17–209 (LDVEDVTVFR…PSLAHVESFW (193 aa)) enclose the ABC transporter domain. Position 49–56 (49–56 (GPNGAGKS)) interacts with ATP.

Belongs to the ABC transporter superfamily. CcmA exporter (TC 3.A.1.107) family. In terms of assembly, the complex is composed of two ATP-binding proteins (CcmA) and two transmembrane proteins (CcmB).

Its subcellular location is the cell inner membrane. It catalyses the reaction heme b(in) + ATP + H2O = heme b(out) + ADP + phosphate + H(+). Its function is as follows. Part of the ABC transporter complex CcmAB involved in the biogenesis of c-type cytochromes; once thought to export heme, this seems not to be the case, but its exact role is uncertain. Responsible for energy coupling to the transport system. In Gluconobacter oxydans (strain 621H) (Gluconobacter suboxydans), this protein is Cytochrome c biogenesis ATP-binding export protein CcmA.